The sequence spans 132 residues: Fatty acid-binding protein, intestinal (132 aa).

The residue at position 2 (alanine 2) is an N-acetylalanine. Hexadecanoate is bound by residues tryptophan 83 and arginine 107. Tetradecanoate-binding residues include tryptophan 83 and arginine 107.

Belongs to the calycin superfamily. Fatty-acid binding protein (FABP) family. As to expression, expressed in the small intestine. Expression in the mucosal cells of the ileum extends from the midvillar region to the villus tips.

The protein resides in the cytoplasm. Its function is as follows. FABPs are thought to play a role in the intracellular transport of long-chain fatty acids and their acyl-CoA esters. FABP2 is probably involved in triglyceride-rich lipoprotein synthesis. Binds saturated long-chain fatty acids with a high affinity, but binds with a lower affinity to unsaturated long-chain fatty acids. FABP2 may also help maintain energy homeostasis by functioning as a lipid sensor. The chain is Fatty acid-binding protein, intestinal (Fabp2) from Rattus norvegicus (Rat).